The primary structure comprises 148 residues: MSKQIRHRKIKEILLSSTVTNQHELILLLEKRGIDVAQATLSRDCSELGVLRSRTASGYRLMIPEDNPGQMIKGLVEMEIQSIESNESSIVIKTLPGRAHGVGSFIDHLKNPGILGTIAGDDTVLVIPSSVHDIRSILDYMQTNLLNN.

This sequence belongs to the ArgR family.

It localises to the cytoplasm. The protein operates within amino-acid biosynthesis; L-arginine biosynthesis [regulation]. Regulates arginine biosynthesis genes. The sequence is that of Arginine repressor from Chlorobium phaeobacteroides (strain BS1).